A 431-amino-acid polypeptide reads, in one-letter code: Glutamate-1-semialdehyde 2,1-aminomutase (431 aa).

Lysine 269 carries the post-translational modification N6-(pyridoxal phosphate)lysine.

Belongs to the class-III pyridoxal-phosphate-dependent aminotransferase family. HemL subfamily. In terms of assembly, homodimer. It depends on pyridoxal 5'-phosphate as a cofactor.

Its subcellular location is the cytoplasm. It catalyses the reaction (S)-4-amino-5-oxopentanoate = 5-aminolevulinate. The protein operates within porphyrin-containing compound metabolism; protoporphyrin-IX biosynthesis; 5-aminolevulinate from L-glutamyl-tRNA(Glu): step 2/2. Its pathway is porphyrin-containing compound metabolism; chlorophyll biosynthesis. This chain is Glutamate-1-semialdehyde 2,1-aminomutase, found in Chlorobium phaeobacteroides (strain DSM 266 / SMG 266 / 2430).